The primary structure comprises 326 residues: Putative HTH-type transcriptional regulatory protein MmarC5_0898 (326 aa).

Residues 128 to 183 enclose the HTH cro/C1-type domain; that stretch reads LRETREKLKISVGELAEISRVSRKTIYKYEQNEANPSAEVAIKIEEYLDVPLIKGI. A DNA-binding region (H-T-H motif) is located at residues 139 to 158; it reads VGELAEISRVSRKTIYKYEQ.

The sequence is that of Putative HTH-type transcriptional regulatory protein MmarC5_0898 from Methanococcus maripaludis (strain C5 / ATCC BAA-1333).